Here is a 223-residue protein sequence, read N- to C-terminus: MQWAVGRRWAWAALLLAVAAVLTQVVWLWLGTQSFVFQREEIAQLARQYAGLDHELAFSRLIVELRRLHPGHVLPDEELQWVFVNAGGWMGAMCLLHASLSEYVLLFGTALGSRGHSGRYWAEISDTIISGTFHQWREGTTKSEVFYPGETVVHGPGEATAVEWGPNTWMVEYGRGVIPSTLAFALADTVFSTQDFLTLFYTLRSYARGLRLELTTYLFGQDP.

At 1 to 9 (MQWAVGRRW) the chain is on the lumenal side. The targeting to endoplasmic reticulum-associated lipid droplets stretch occupies residues 2-8 (QWAVGRR). A helical membrane pass occupies residues 10–30 (AWAALLLAVAAVLTQVVWLWL). At 31–223 (GTQSFVFQRE…LTTYLFGQDP (193 aa)) the chain is on the cytoplasmic side. Residues 99-106 (SLSEYVLL) are important for ligand-binding. Positions 177–223 (VIPSTLAFALADTVFSTQDFLTLFYTLRSYARGLRLELTTYLFGQDP) are C-terminal hydrophobic region.

It belongs to the ERG2 family. Homotrimer. Forms a ternary complex with ANK2 and ITPR3. The complex is disrupted by agonists. Interacts with KCNA4. Interacts with KCNA2; cocaine consumption leads to increased interaction. Interacts with RNF112 in an oxidative stress-regulated manner. In terms of tissue distribution, widely expressed with higher expression in liver, colon, prostate, placenta, small intestine, heart and pancreas. Expressed in the retina by retinal pigment epithelial cells. Expressed in alpha-motor neurons.

It localises to the nucleus inner membrane. The protein resides in the nucleus outer membrane. Its subcellular location is the nucleus envelope. It is found in the cytoplasmic vesicle. The protein localises to the endoplasmic reticulum membrane. It localises to the membrane. The protein resides in the lipid droplet. Its subcellular location is the cell junction. It is found in the cell membrane. The protein localises to the cell projection. It localises to the growth cone. The protein resides in the postsynaptic density membrane. In terms of biological role, functions in lipid transport from the endoplasmic reticulum and is involved in a wide array of cellular functions probably through regulation of the biogenesis of lipid microdomains at the plasma membrane. Involved in the regulation of different receptors it plays a role in BDNF signaling and EGF signaling. Also regulates ion channels like the potassium channel and could modulate neurotransmitter release. Plays a role in calcium signaling through modulation together with ANK2 of the ITP3R-dependent calcium efflux at the endoplasmic reticulum. Plays a role in several other cell functions including proliferation, survival and death. Originally identified for its ability to bind various psychoactive drugs it is involved in learning processes, memory and mood alteration. Necessary for proper mitochondrial axonal transport in motor neurons, in particular the retrograde movement of mitochondria. Plays a role in protecting cells against oxidative stress-induced cell death via its interaction with RNF112. This Homo sapiens (Human) protein is Sigma non-opioid intracellular receptor 1 (SIGMAR1).